Reading from the N-terminus, the 297-residue chain is Thiosulfate sulfurtransferase (297 aa).

Position 14 is an N6-acetyllysine; alternate (K14). Position 14 is an N6-succinyllysine; alternate (K14). A Rhodanese 1 domain is found at 25–143; it reads LGPGLRVLDA…WLKEGHPVTS (119 aa). S35 carries an O-linked (GlcNAc) serine glycan. Residue S38 is modified to Phosphoserine. Position 136 is an N6-acetyllysine; alternate (K136). At K136 the chain carries N6-succinyllysine; alternate. The interval 144–159 is hinge; it reads EPSRPEPAVFKATLDR. The residue at position 163 (K163) is an N6-acetyllysine. The region spanning 173–288 is the Rhodanese 2 domain; the sequence is QSKRFQLVDS…WFHQAPPETR (116 aa). K175 bears the N6-acetyllysine; alternate mark. K175 is modified (N6-succinyllysine; alternate). R187 is a substrate binding site. K224 carries the post-translational modification N6-acetyllysine; alternate. An N6-succinyllysine; alternate modification is found at K224. The residue at position 236 (K236) is an N6-acetyllysine. N6-acetyllysine; alternate is present on K237. K237 is subject to N6-succinyllysine; alternate. The active-site Cysteine persulfide intermediate is the C248. K250 provides a ligand contact to substrate.

Monomer.

It is found in the mitochondrion matrix. The catalysed reaction is thiosulfate + hydrogen cyanide = thiocyanate + sulfite + 2 H(+). Together with MRPL18, acts as a mitochondrial import factor for the cytosolic 5S rRNA. Only the nascent unfolded cytoplasmic form is able to bind to the 5S rRNA. Formation of iron-sulfur complexes and cyanide detoxification. Binds molecular oxygen and sulfur. The polypeptide is Thiosulfate sulfurtransferase (TST) (Cricetulus griseus (Chinese hamster)).